The following is a 205-amino-acid chain: RNA pyrophosphohydrolase (205 aa).

A Nudix hydrolase domain is found at 6-149; the sequence is GFRPNVGIVL…KRGVYARALR (144 aa). The Nudix box motif lies at 38-59; that stretch reads GGMNTDETPVEAMYRELREETG. The interval 178-205 is disordered; that stretch reads GSSAAGHDSPRKRPRKRNGARAMRINND. The segment covering 187–196 has biased composition (basic residues); that stretch reads PRKRPRKRNG.

The protein belongs to the Nudix hydrolase family. RppH subfamily. Requires a divalent metal cation as cofactor.

Functionally, accelerates the degradation of transcripts by removing pyrophosphate from the 5'-end of triphosphorylated RNA, leading to a more labile monophosphorylated state that can stimulate subsequent ribonuclease cleavage. The polypeptide is RNA pyrophosphohydrolase (Xanthomonas axonopodis pv. citri (strain 306)).